Here is a 119-residue protein sequence, read N- to C-terminus: Microtubule nucleation factor SSNA1 (119 aa).

N-acetylthreonine is present on T2. Positions 2–32 are important for localization to the centrosome; sequence TQQGAALQNYNNELVKCIEELCQKREELCRQ. A coiled-coil region spans residues 13 to 70; it reads NELVKCIEELCQKREELCRQIQEEEDEKQRLQNEVRQLTEKLARVNENLARKIASRNE.

This sequence belongs to the SSNA1 family. In terms of assembly, self-associates to form fibrils. Also forms dimers as well as monomers. Interacts with SPAST. Widely expressed.

The protein resides in the nucleus. Its subcellular location is the cytoplasm. It localises to the cytoskeleton. It is found in the microtubule organizing center. The protein localises to the centrosome. The protein resides in the centriole. Its subcellular location is the midbody. It localises to the flagellum basal body. It is found in the flagellum axoneme. The protein localises to the cell projection. The protein resides in the axon. Its function is as follows. Microtubule-binding protein which stabilizes dynamic microtubules by slowing growth and shrinkage at both plus and minus ends and serves as a sensor of microtubule damage, protecting microtubules from the microtubule-severing enzyme SPAST. Induces microtubule branching which is mediated by the formation of long SSNA1 fibrils which guide microtubule protofilaments to split apart from the mother microtubule and form daughter microtubules. Plays a role in axon outgrowth and branching. Required for cell division. This chain is Microtubule nucleation factor SSNA1, found in Homo sapiens (Human).